The primary structure comprises 283 residues: MIYENAPAKINLTLDTLYKRDDGYHEVEMIMTTVDLYDRLTLEKRKDKKIVLKIEHRYVPNDHRNLAYKAAELMIERYNIKCGVTITLDKTIPIAAGLAGGSSDAAATFRGMNKLFELNLSLKTLAELSSEIGSDIPFCIYGRTSLCTGRGEVLEHLPKPPSCWVILAKPEISVSTQEVYSALDLSQAHEQIENEKCRRAIEAGDYLEMIRTLGNRLETVTIEMHPVIQMLKETMMKAGADVAMMSGSGPTVYGLAAKERQAKSVVNALKGCCKEVYMVRMLG.

K9 is an active-site residue. Residue P93–S103 participates in ATP binding. D135 is an active-site residue.

It belongs to the GHMP kinase family. IspE subfamily.

It carries out the reaction 4-CDP-2-C-methyl-D-erythritol + ATP = 4-CDP-2-C-methyl-D-erythritol 2-phosphate + ADP + H(+). Its pathway is isoprenoid biosynthesis; isopentenyl diphosphate biosynthesis via DXP pathway; isopentenyl diphosphate from 1-deoxy-D-xylulose 5-phosphate: step 3/6. Catalyzes the phosphorylation of the position 2 hydroxy group of 4-diphosphocytidyl-2C-methyl-D-erythritol. The polypeptide is 4-diphosphocytidyl-2-C-methyl-D-erythritol kinase (Macrococcus caseolyticus (strain JCSC5402) (Macrococcoides caseolyticum)).